Reading from the N-terminus, the 298-residue chain is MAVRARDYWDLTKPKVVALIVFTALVGMFLAIPDMPTWLQVRTGALGFLGIWLAASAAAAINQLLDAKIDAQMARTSWRPLVVGKVQPWQVLVFAGALIVISMTILVVWVNVITAVLTFASLIGYAVIYTVYLKRATSQNIVIGGLAGATPPMLGWAAVTGLPTSADWINASLLVLIIFIWTPPHFWALAIFRRADYAKAAIPMLPVTHGVPHTRKQILVYTVLLAIVTLLPVTVGMSGVFYLGGAVVLNAVFLWYAWRMLNPPDELFSMKMFGYSIVYLMALFAFLMVDHLLLPWVR.

The next 9 helical transmembrane spans lie at 16–36 (VVAL…PDMP), 45–65 (ALGF…NQLL), 93–113 (VFAG…VNVI), 114–134 (TAVL…VYLK), 141–161 (IVIG…AVTG), 172–192 (SLLV…LAIF), 223–243 (VLLA…VFYL), 244–264 (GGAV…LNPP), and 277–297 (IVYL…LPWV).

This sequence belongs to the UbiA prenyltransferase family. Protoheme IX farnesyltransferase subfamily.

It is found in the cell inner membrane. It catalyses the reaction heme b + (2E,6E)-farnesyl diphosphate + H2O = Fe(II)-heme o + diphosphate. The protein operates within porphyrin-containing compound metabolism; heme O biosynthesis; heme O from protoheme: step 1/1. In terms of biological role, converts heme B (protoheme IX) to heme O by substitution of the vinyl group on carbon 2 of heme B porphyrin ring with a hydroxyethyl farnesyl side group. This is Protoheme IX farnesyltransferase from Xanthomonas oryzae pv. oryzae (strain MAFF 311018).